Consider the following 982-residue polypeptide: Nitrate reductase [NADPH] (982 aa).

The segment at 1 to 128 (MEAPALEQRQ…PPSTRLTTIL (128 aa)) is disordered. Residues 10–20 (QSLHDSSERQQ) show a composition bias toward basic and acidic residues. Low complexity predominate over residues 63 to 110 (TASPTTTDFSSSSSDDNSTTLETSVNYSHSSNTNTNTSCPPSPITSSS). Position 240 (C240) interacts with Mo-molybdopterin. Residues 617–692 (TRLITLEELR…MPTYHIGTLT (76 aa)) enclose the Cytochrome b5 heme-binding domain. 2 residues coordinate heme: H652 and H675. The region spanning 721–836 (KTWNSAILTF…KGPVGKFVYQ (116 aa)) is the FAD-binding FR-type domain. FAD contacts are provided by residues 776–779 (RAYT), 794–798 (LVKIY), 810–812 (QMT), S860, and T863. 952–961 (MVLLCGPEGM) is an NADP(+) binding site.

The protein belongs to the nitrate reductase family. As to quaternary structure, homodimer. FAD is required as a cofactor. Heme serves as cofactor. Requires Mo-molybdopterin as cofactor.

The catalysed reaction is nitrite + NADP(+) + H2O = nitrate + NADPH + H(+). It participates in nitrogen metabolism; nitrate reduction (assimilation). In terms of biological role, nitrate reductase is a key enzyme involved in the first step of nitrate assimilation in plants, fungi and bacteria. The protein is Nitrate reductase [NADPH] (nit-3) of Neurospora crassa (strain ATCC 24698 / 74-OR23-1A / CBS 708.71 / DSM 1257 / FGSC 987).